An 83-amino-acid chain; its full sequence is uncharacterized protein (83 aa).

The N-terminal stretch at 1 to 20 is a signal peptide; it reads MRRALTLAVLATCAVLPALA.

To P.denitrificans and M.extorquens MoxJ.

This is an uncharacterized protein from Paracoccus denitrificans.